Reading from the N-terminus, the 309-residue chain is Porphobilinogen deaminase (309 aa).

Cys241 is subject to S-(dipyrrolylmethanemethyl)cysteine.

It belongs to the HMBS family. In terms of assembly, monomer. Requires dipyrromethane as cofactor.

The catalysed reaction is 4 porphobilinogen + H2O = hydroxymethylbilane + 4 NH4(+). It participates in porphyrin-containing compound metabolism; protoporphyrin-IX biosynthesis; coproporphyrinogen-III from 5-aminolevulinate: step 2/4. Functionally, tetrapolymerization of the monopyrrole PBG into the hydroxymethylbilane pre-uroporphyrinogen in several discrete steps. The protein is Porphobilinogen deaminase of Bacillus cereus (strain G9842).